A 121-amino-acid polypeptide reads, in one-letter code: Small ribosomal subunit protein uS13 (121 aa).

The disordered stretch occupies residues 93–121 (KGLPMRGQRTRTNARTRKGPRRAAQALKK).

The protein belongs to the universal ribosomal protein uS13 family. As to quaternary structure, part of the 30S ribosomal subunit. Forms a loose heterodimer with protein S19. Forms two bridges to the 50S subunit in the 70S ribosome.

Functionally, located at the top of the head of the 30S subunit, it contacts several helices of the 16S rRNA. In the 70S ribosome it contacts the 23S rRNA (bridge B1a) and protein L5 of the 50S subunit (bridge B1b), connecting the 2 subunits; these bridges are implicated in subunit movement. Contacts the tRNAs in the A and P-sites. The polypeptide is Small ribosomal subunit protein uS13 (Burkholderia ambifaria (strain ATCC BAA-244 / DSM 16087 / CCUG 44356 / LMG 19182 / AMMD) (Burkholderia cepacia (strain AMMD))).